The chain runs to 387 residues: 3-hydroxy-D-aspartate aldolase (387 aa).

N6-(pyridoxal phosphate)lysine is present on Lys-62. Gln-85 provides a ligand contact to pyridoxal 5'-phosphate. Positions 199–228 (HGQLRGPQGQAGRRHCPGERGRGRAGGRGL) are disordered. Pyridoxal 5'-phosphate is bound by residues Thr-238, 256-257 (GS), and Tyr-265. Mg(2+) contacts are provided by His-355 and Asp-357.

This sequence belongs to the DSD1 family. In terms of assembly, homodimer. It depends on pyridoxal 5'-phosphate as a cofactor. Requires Mn(2+) as cofactor. Mg(2+) is required as a cofactor. Co(2+) serves as cofactor.

It carries out the reaction (3S)-3-hydroxy-D-aspartate = glyoxylate + glycine. It catalyses the reaction (3R)-3-hydroxy-D-aspartate = glyoxylate + glycine. In terms of biological role, catalyzes the condensation of glyoxylate and glycine into (2R,3S)-beta-hydroxyaspartate ((3S)-3-hydroxy-D-aspartate). Functions in glyoxylate assimilation via the beta-hydroxyaspartate cycle (BHAC). In vitro catalyzes the cleavage of both D-erythro- and D-threo-3-hydroxyaspartate to glycine and glyoxylate. Also acts on D-threonine, D-3-phenylserine and D-3-3,4-methylenedioxyphenylserine. This is 3-hydroxy-D-aspartate aldolase (dhaa) from Paracoccus denitrificans.